A 219-amino-acid chain; its full sequence is Peptide methionine sulfoxide reductase MsrA (219 aa).

The active site involves Cys-58.

This sequence belongs to the MsrA Met sulfoxide reductase family.

It carries out the reaction L-methionyl-[protein] + [thioredoxin]-disulfide + H2O = L-methionyl-(S)-S-oxide-[protein] + [thioredoxin]-dithiol. It catalyses the reaction [thioredoxin]-disulfide + L-methionine + H2O = L-methionine (S)-S-oxide + [thioredoxin]-dithiol. Functionally, has an important function as a repair enzyme for proteins that have been inactivated by oxidation. Catalyzes the reversible oxidation-reduction of methionine sulfoxide in proteins to methionine. In Ectopseudomonas mendocina (strain ymp) (Pseudomonas mendocina), this protein is Peptide methionine sulfoxide reductase MsrA.